The following is a 219-amino-acid chain: Small ribosomal subunit protein uS3c (219 aa).

Positions 39–111 (IRKFLMEKIK…NSFFNVKINF (73 aa)) constitute a KH type-2 domain.

This sequence belongs to the universal ribosomal protein uS3 family. Part of the 30S ribosomal subunit.

It is found in the plastid. The chain is Small ribosomal subunit protein uS3c (rps3) from Euglena longa (Euglenophycean alga).